Reading from the N-terminus, the 458-residue chain is Argininosuccinate lyase (458 aa).

The protein belongs to the lyase 1 family. Argininosuccinate lyase subfamily.

It is found in the cytoplasm. It catalyses the reaction 2-(N(omega)-L-arginino)succinate = fumarate + L-arginine. It participates in amino-acid biosynthesis; L-arginine biosynthesis; L-arginine from L-ornithine and carbamoyl phosphate: step 3/3. The sequence is that of Argininosuccinate lyase from Pseudoalteromonas atlantica (strain T6c / ATCC BAA-1087).